The sequence spans 420 residues: Gamma-glutamyl phosphate reductase (420 aa).

This sequence belongs to the gamma-glutamyl phosphate reductase family.

The protein localises to the cytoplasm. It catalyses the reaction L-glutamate 5-semialdehyde + phosphate + NADP(+) = L-glutamyl 5-phosphate + NADPH + H(+). It functions in the pathway amino-acid biosynthesis; L-proline biosynthesis; L-glutamate 5-semialdehyde from L-glutamate: step 2/2. Catalyzes the NADPH-dependent reduction of L-glutamate 5-phosphate into L-glutamate 5-semialdehyde and phosphate. The product spontaneously undergoes cyclization to form 1-pyrroline-5-carboxylate. This chain is Gamma-glutamyl phosphate reductase, found in Neisseria gonorrhoeae (strain ATCC 700825 / FA 1090).